We begin with the raw amino-acid sequence, 109 residues long: Large ribosomal subunit protein uL22 (109 aa).

The protein belongs to the universal ribosomal protein uL22 family. As to quaternary structure, part of the 50S ribosomal subunit.

This protein binds specifically to 23S rRNA; its binding is stimulated by other ribosomal proteins, e.g. L4, L17, and L20. It is important during the early stages of 50S assembly. It makes multiple contacts with different domains of the 23S rRNA in the assembled 50S subunit and ribosome. Its function is as follows. The globular domain of the protein is located near the polypeptide exit tunnel on the outside of the subunit, while an extended beta-hairpin is found that lines the wall of the exit tunnel in the center of the 70S ribosome. The sequence is that of Large ribosomal subunit protein uL22 from Polynucleobacter asymbioticus (strain DSM 18221 / CIP 109841 / QLW-P1DMWA-1) (Polynucleobacter necessarius subsp. asymbioticus).